We begin with the raw amino-acid sequence, 114 residues long: MTAPALSARGAYRQILRATRIAFHEDTRVLLAARQEARRQFDEHKRVGIDTPMQINHAIEVASILKHNIVQGVKPEGDEAAKWELRIHDDIERGDNDSIKHAGKDIKIHKACSA.

The transit peptide at methionine 1–alanine 18 directs the protein to the mitochondrion.

The protein belongs to the complex I LYR family. MZM1 subfamily. As to quaternary structure, interacts with RIP1.

It localises to the mitochondrion matrix. Assembly factor required for Rieske Fe-S protein RIP1 incorporation into the cytochrome b-c1 (CIII) complex. Functions as a chaperone, binding to this subunit within the mitochondrial matrix and stabilizing it prior to its translocation and insertion into the late CIII dimeric intermediate within the mitochondrial inner membrane. Modulates the mitochondrial matrix zinc pool. This chain is Mitochondrial zinc maintenance protein 1, mitochondrial (MZM1), found in Aspergillus oryzae (strain ATCC 42149 / RIB 40) (Yellow koji mold).